A 130-amino-acid chain; its full sequence is Large ribosomal subunit protein bL12 (130 aa).

Belongs to the bacterial ribosomal protein bL12 family. As to quaternary structure, homodimer. Part of the ribosomal stalk of the 50S ribosomal subunit. Forms a multimeric L10(L12)X complex, where L10 forms an elongated spine to which 2 to 4 L12 dimers bind in a sequential fashion. Binds GTP-bound translation factors.

Functionally, forms part of the ribosomal stalk which helps the ribosome interact with GTP-bound translation factors. Is thus essential for accurate translation. In Nostoc sp. (strain PCC 7120 / SAG 25.82 / UTEX 2576), this protein is Large ribosomal subunit protein bL12.